Reading from the N-terminus, the 1035-residue chain is Eukaryotic translation initiation factor 3 subunit A (1035 aa).

Positions 92 to 121 (LKKFIELAEKKVTEAQAKADEIQSSLESAA) form a coiled coil. The PCI domain occupies 339 to 523 (MTKAASFVLL…GVLTFDTDVF (185 aa)). Positions 606–910 (ERRVIIEKKK…LRAKRAGLSE (305 aa)) form a coiled coil. 2 stretches are compositionally biased toward basic and acidic residues: residues 619-632 (TDALQRKQKEEETR) and 809-901 (KAAE…EARL). Disordered stretches follow at residues 619-649 (TDALQRKQKEEETRKRIRTQQLQEAEKQRLA) and 809-1035 (KAAE…QQNQ). 2 stretches are compositionally biased toward low complexity: residues 943–953 (KEAAGGAAPEA) and 988–1004 (PPSQRSSQPPSRTQTPP).

This sequence belongs to the eIF-3 subunit A family. Component of the eukaryotic translation initiation factor 3 (eIF-3) complex.

The protein localises to the cytoplasm. RNA-binding component of the eukaryotic translation initiation factor 3 (eIF-3) complex, which is involved in protein synthesis of a specialized repertoire of mRNAs and, together with other initiation factors, stimulates binding of mRNA and methionyl-tRNAi to the 40S ribosome. The eIF-3 complex specifically targets and initiates translation of a subset of mRNAs involved in cell proliferation. This Emericella nidulans (strain FGSC A4 / ATCC 38163 / CBS 112.46 / NRRL 194 / M139) (Aspergillus nidulans) protein is Eukaryotic translation initiation factor 3 subunit A (tif32).